The sequence spans 543 residues: Periplasmic oligopeptide-binding protein OppA (543 aa).

An N-terminal signal peptide occupies residues 1-26 (MTNITKRSLVAAGVLAALMAGNVALA). Cysteines 297 and 443 form a disulfide.

It belongs to the bacterial solute-binding protein 5 family. In terms of assembly, the complex is composed of two ATP-binding proteins (OppD and OppF), two transmembrane proteins (OppB and OppC) and a solute-binding protein (OppA).

Its subcellular location is the periplasm. In terms of biological role, part of the ABC transporter complex OppABCDF involved in the uptake of oligopeptides. Plays an important nutritional role. Binds peptides containing from two to five amino acid residues. Displays a preference for tripeptides and tetrapeptides over dipeptides and pentapeptides, for peptides composed of L-amino acids and for positively charged peptides. Cannot bind the cell wall peptide L-Ala-D-Gly-gamma-meso-diaminopimelic acid. The protein is Periplasmic oligopeptide-binding protein OppA of Escherichia coli (strain K12).